We begin with the raw amino-acid sequence, 312 residues long: Isoflavone reductase homolog (312 aa).

NADP(+) is bound by residues 10–16 (GGTGYVG), Arg35, and Lys44. The Proton acceptor role is filled by Lys138. Residue Arg142 coordinates NADP(+). A substrate-binding site is contributed by His270.

It belongs to the NmrA-type oxidoreductase family. Isoflavone reductase subfamily.

The polypeptide is Isoflavone reductase homolog (Lupinus albus (White lupine)).